Reading from the N-terminus, the 294-residue chain is Transmembrane protein 178B (294 aa).

Residues 1-23 (MAAGKLLLYAGLSLSLCALGMLA) form the signal peptide. Transmembrane regions (helical) follow at residues 172–192 (AGFMGMAVAIILFGWIIGMLG), 206–226 (LLFLMGGTFCIISLCTCVAGI), and 252–272 (MFCAWGGLGLSLIAGFFCTLA).

The protein belongs to the TMEM178 family.

Its subcellular location is the membrane. The sequence is that of Transmembrane protein 178B (tmem178b) from Danio rerio (Zebrafish).